The primary structure comprises 572 residues: Sialate:O-sulfotransferase 2 (572 aa).

At 1 to 18 (MARSLLKIHRYFRRKPVR) the chain is on the cytoplasmic side. The chain crosses the membrane as a helical; Signal-anchor for type II membrane protein span at residues 19-39 (FFSFILLYLTAGSLVFLHSGF). The Extracellular portion of the chain corresponds to 40–572 (SSDSSTAGIA…SGVPDEYRPR (533 aa)). 2 consecutive WSC domains span residues 134–226 (RAKY…YRLE) and 237–331 (SAIF…YQTQ). N-linked (GlcNAc...) asparagine glycans are attached at residues Asn-196, Asn-249, Asn-262, and Asn-561.

Belongs to the WSCD family.

Its subcellular location is the golgi apparatus membrane. Sialate:O-sulfotransferase which catalyzes 8-O-sulfation at the Sia-glycan level using 3'-phosphoadenosine 5'-phosphosulfate (PAPS) as a donor, forming 8-O-sulfated Sia (Sia8S)-glycans. This is Sialate:O-sulfotransferase 2 (wscd2) from Danio rerio (Zebrafish).